Consider the following 400-residue polypeptide: CCA-adding enzyme (400 aa).

Positions 27 and 30 each coordinate ATP. Positions 27 and 30 each coordinate CTP. Residues Asp-40 and Asp-42 each contribute to the Mg(2+) site. ATP-binding residues include Arg-111, Asp-154, Arg-157, Arg-160, and Arg-163. The CTP site is built by Arg-111, Asp-154, Arg-157, Arg-160, and Arg-163.

Belongs to the tRNA nucleotidyltransferase/poly(A) polymerase family. Bacterial CCA-adding enzyme type 3 subfamily. As to quaternary structure, homodimer. The cofactor is Mg(2+).

The enzyme catalyses a tRNA precursor + 2 CTP + ATP = a tRNA with a 3' CCA end + 3 diphosphate. It carries out the reaction a tRNA with a 3' CCA end + 2 CTP + ATP = a tRNA with a 3' CCACCA end + 3 diphosphate. Functionally, catalyzes the addition and repair of the essential 3'-terminal CCA sequence in tRNAs without using a nucleic acid template. Adds these three nucleotides in the order of C, C, and A to the tRNA nucleotide-73, using CTP and ATP as substrates and producing inorganic pyrophosphate. tRNA 3'-terminal CCA addition is required both for tRNA processing and repair. Also involved in tRNA surveillance by mediating tandem CCA addition to generate a CCACCA at the 3' terminus of unstable tRNAs. While stable tRNAs receive only 3'-terminal CCA, unstable tRNAs are marked with CCACCA and rapidly degraded. In Bacillus pumilus (strain SAFR-032), this protein is CCA-adding enzyme.